Consider the following 380-residue polypeptide: DNA replication and repair protein RecF (380 aa).

30–37 (GPNGFGKT) is an ATP binding site.

Belongs to the RecF family.

The protein localises to the cytoplasm. In terms of biological role, the RecF protein is involved in DNA metabolism; it is required for DNA replication and normal SOS inducibility. RecF binds preferentially to single-stranded, linear DNA. It also seems to bind ATP. The chain is DNA replication and repair protein RecF from Mycobacterium sp. (strain JLS).